Reading from the N-terminus, the 365-residue chain is Snurportin-1 (365 aa).

Positions 10 to 72 (GGVALAAPNS…RLAEGDWAGV (63 aa)) constitute an IBB domain. Disordered stretches follow at residues 15-34 (AAPN…KGRG) and 69-90 (WAGV…EMEV). The segment covering 73–90 (ESDEDGGEDGDGEEEMEV) has biased composition (acidic residues). The segment at 129-131 (GKR) is interaction with m3G-cap structure. The necessary for binding to the m3G-cap structure stretch occupies residues 211–333 (LSSKIQEEEG…GKAQPSAEAA (123 aa)). A disordered region spans residues 317 to 365 (RSKKLAAGKAQPSAEAAARNGHYELEHLSTPQPANSAQGQEEAGSQMEN). A compositionally biased stretch (polar residues) spans 345–355 (STPQPANSAQG).

Belongs to the snurportin family.

Its subcellular location is the nucleus. The protein resides in the cytoplasm. In terms of biological role, functions as an U snRNP-specific nuclear import adapter. Involved in the trimethylguanosine (m3G)-cap-dependent nuclear import of U snRNPs. Binds specifically to the terminal m3G-cap U snRNAs. In Gallus gallus (Chicken), this protein is Snurportin-1 (SNUPN).